A 310-amino-acid chain; its full sequence is Protein BIG GRAIN 1 (310 aa).

Positions 77–140 (SYRARAPGPH…EKKAKKPGAS (64 aa)) are disordered. Over residues 90–106 (SSSSECSSYGGFSSSEA) the composition is skewed to low complexity.

Belongs to the BIG GRAIN 1 (BG1) plant protein family. As to expression, mostly expressed in the vascular tissues of leaves, culms and young panicles, especially in hulls.

The protein localises to the cell membrane. Involved in auxin transport. Positive regulator of the auxin signaling pathway involved in gravitropism, plant growth and grain development. The polypeptide is Protein BIG GRAIN 1 (Oryza sativa subsp. japonica (Rice)).